The following is a 325-amino-acid chain: Flavin-dependent thymidylate synthase (325 aa).

Positions 12–267 constitute a ThyX domain; sequence ISVRLLEYTG…PRLFRWAGPS (256 aa). Residues Ser65, 89–91, and Gln97 each bind FAD; that span reads RHR. DUMP-binding positions include 86–89 and 97–101; these read QLVR and QLSHR. A ThyX motif motif is present at residues 89–99; it reads RHRVASYTQLS. Residues 110–159 form an insert region; that stretch reads AALKACESIGLDCPSKPAETEGGRKAAYRLYSQALERAARDFGASERFAI. Arg205 provides a ligand contact to dUMP. 221–223 contributes to the FAD binding site; that stretch reads NAR. Arg233 is a binding site for dUMP. Residue Arg233 is the Involved in ionization of N3 of dUMP, leading to its activation of the active site.

It belongs to the thymidylate synthase ThyX family. In terms of assembly, homotetramer. FAD serves as cofactor.

It catalyses the reaction dUMP + (6R)-5,10-methylene-5,6,7,8-tetrahydrofolate + NADPH + H(+) = dTMP + (6S)-5,6,7,8-tetrahydrofolate + NADP(+). It participates in pyrimidine metabolism; dTTP biosynthesis. Functionally, catalyzes the reductive methylation of 2'-deoxyuridine-5'-monophosphate (dUMP) to 2'-deoxythymidine-5'-monophosphate (dTMP) while utilizing 5,10-methylenetetrahydrofolate (mTHF) as the methyl donor, and NADPH and FADH(2) as the reductant. This chain is Flavin-dependent thymidylate synthase, found in Aeropyrum pernix (strain ATCC 700893 / DSM 11879 / JCM 9820 / NBRC 100138 / K1).